The following is a 342-amino-acid chain: Phomopsin biosynthesis cluster protein B' (342 aa).

Residues 1 to 22 (MESIAKAKSLPNKGRTYDSQRP) form a disordered region. Residues 87–107 (VLIIGCAVISLFAIIGALGFA) form a helical membrane-spanning segment. The interval 118–186 (CASPAHQNPH…QCGESPDEAQ (69 aa)) is disordered. Low complexity predominate over residues 144–155 (HSGSHSSSSSTN). Asparagine 248 carries an N-linked (GlcNAc...) asparagine glycan.

It is found in the membrane. Its function is as follows. Part of the gene cluster that mediates the biosynthesis of the phomopsins, a group of hexapeptide mycotoxins which infects lupins and causes lupinosis disease in livestock. The role of phomB' within the phomopsins biosynthesis pathway has still to be determined. The pathway starts with the processing of the precursor phomA by several endopeptidases including kexin proteases as well as the cluster-specific S41 family peptidase phomP1 and the oligopeptidase phomG to produce 10 identical copies of the hexapeptide Tyr-Val-Ile-Pro-Ile-Asp. After being excised from the precursor peptide, the core peptides are cyclized and modified post-translationally by enzymes encoded within the gene cluster. The timing and order of proteolysis of the phomA precursor and PTMs are still unknown. Two tyrosinase-like enzymes, phomQ1 and phomQ2, catalyze the chlorination and hydroxylation of Tyr, respectively. PhomYb, is proposed to be involved in the construction of the macrocyclic structure. The other 4 ustYa family proteins may be involved in PTMs that generate the unique structure of phomopsin A. PhomYa is required for the hydroxylation of C-beta of Tyr. PhomYc, phomYd, and phomYe are responsible for the biosynthesis of 2,3-dehydroisoleucine (dIle), 2,3-dehydroaspartic acid (dAsp), and 3,4-dehydroproline (dPro), respectively. While dIle formation by phomYc is indispensable for the installation of dAsp by phomYd, the order of the other PTMs have not been elucidated yet. Most of the biosynthetic enzymes likely have broad substrate specificity, and thus, there might be a metabolic grid from a precursor to phomopsin A. The enzyme(s) responsible for the biosynthesis of 3,4-dehydrovaline (dVal) have also not been identified yet. Finally, phomM acts as an S-adenosylmethionine-dependent alpha-N-methyltransferase that catalyzes two successive N-methylation reactions, converting N-desmethyl-phomopsin A to phomopsin A and phomopsin A further to an N,N-dimethylated congener called phomopsin E. This chain is Phomopsin biosynthesis cluster protein B', found in Diaporthe leptostromiformis (Lupinosis disease fungus).